The primary structure comprises 1061 residues: Eukaryotic translation initiation factor 3 subunit A (1061 aa).

Residues 114 to 126 (QSSIEATTGSSSV) are compositionally biased toward polar residues. Positions 114–133 (QSSIEATTGSSSVEDLEASE) are disordered. A PCI domain is found at 339–523 (LQKAATFVVL…GVLSFDVDVF (185 aa)). 2 coiled-coil regions span residues 609–724 (EVIQ…KRLD) and 789–906 (RADL…AAAA). Residues 828 to 901 (REKREREEKE…EAMARRRAEK (74 aa)) show a composition bias toward basic and acidic residues. The tract at residues 828-1061 (REKREREEKE…KYVPKFRREG (234 aa)) is disordered. Composition is skewed to pro residues over residues 950-962 (SGPPPARAAPPPI) and 1000-1011 (APPPERSGPPPR).

It belongs to the eIF-3 subunit A family. In terms of assembly, component of the eukaryotic translation initiation factor 3 (eIF-3) complex.

It is found in the cytoplasm. In terms of biological role, RNA-binding component of the eukaryotic translation initiation factor 3 (eIF-3) complex, which is involved in protein synthesis of a specialized repertoire of mRNAs and, together with other initiation factors, stimulates binding of mRNA and methionyl-tRNAi to the 40S ribosome. The eIF-3 complex specifically targets and initiates translation of a subset of mRNAs involved in cell proliferation. The sequence is that of Eukaryotic translation initiation factor 3 subunit A from Chaetomium globosum (strain ATCC 6205 / CBS 148.51 / DSM 1962 / NBRC 6347 / NRRL 1970) (Soil fungus).